The primary structure comprises 44 residues: MQDIKTYLSTAPVLATLWFSSLAGLLIEINRFFPDALTFPFFSF.

A helical transmembrane segment spans residues 7-27 (YLSTAPVLATLWFSSLAGLLI).

Belongs to the PsaJ family.

The protein resides in the plastid. The protein localises to the chloroplast thylakoid membrane. Functionally, may help in the organization of the PsaE and PsaF subunits. The sequence is that of Photosystem I reaction center subunit IX from Welwitschia mirabilis (Tree tumbo).